The sequence spans 308 residues: Pantothenate kinase (308 aa).

Residue 90-97 (GSVAVGKS) coordinates ATP.

This sequence belongs to the prokaryotic pantothenate kinase family.

It is found in the cytoplasm. The catalysed reaction is (R)-pantothenate + ATP = (R)-4'-phosphopantothenate + ADP + H(+). It functions in the pathway cofactor biosynthesis; coenzyme A biosynthesis; CoA from (R)-pantothenate: step 1/5. The sequence is that of Pantothenate kinase from Sorangium cellulosum (strain So ce56) (Polyangium cellulosum (strain So ce56)).